A 205-amino-acid polypeptide reads, in one-letter code: Outer-membrane lipoprotein carrier protein (205 aa).

A signal peptide spans 1–19 (MKKIIICFIFVFSINVSFA).

This sequence belongs to the LolA family. Monomer.

The protein localises to the periplasm. In terms of biological role, participates in the translocation of lipoproteins from the inner membrane to the outer membrane. Only forms a complex with a lipoprotein if the residue after the N-terminal Cys is not an aspartate (The Asp acts as a targeting signal to indicate that the lipoprotein should stay in the inner membrane). In Francisella tularensis subsp. holarctica (strain LVS), this protein is Outer-membrane lipoprotein carrier protein.